A 366-amino-acid chain; its full sequence is Cobalt-precorrin-5B C(1)-methyltransferase (366 aa).

This sequence belongs to the CbiD family.

It carries out the reaction Co-precorrin-5B + S-adenosyl-L-methionine = Co-precorrin-6A + S-adenosyl-L-homocysteine. The protein operates within cofactor biosynthesis; adenosylcobalamin biosynthesis; cob(II)yrinate a,c-diamide from sirohydrochlorin (anaerobic route): step 6/10. Its function is as follows. Catalyzes the methylation of C-1 in cobalt-precorrin-5B to form cobalt-precorrin-6A. This Hahella chejuensis (strain KCTC 2396) protein is Cobalt-precorrin-5B C(1)-methyltransferase.